A 443-amino-acid polypeptide reads, in one-letter code: MSGFNKNQIYWGDYVGVIAAFVGVYTELVARIFIYMIPERVREWFRVRIIVLYHYYISSKTTDGMTDAVQKCRNIYEICEAFGYRVEEHLVRTQDNFILCLHRITHPKQSQHKREVVYCHHGLMTNSELWVAVNESERSLPFVLIESGYDVWLGNNRGNKYSRKHITYKPKDEEFWNFSLDDMAMFDIPDTVDYILRETGREKLNYIGFSQGTAQAMAALSINPDLNDKVNIFIGLAPAYAPKGFSNYFVDYIVKVNPKIMYHLFGRRCLLPSVTFWQNICYPPIFVKIVDVSLKILFNWDLSNISLNQKLCGYAHLYSFSSVKSVVHWLQIIKNCTFQLYDDDMALLAGYGSRHYQVPLFPTNNIKCPMLILWGGKDTLINMEVMRTALPPHAKEVSIAHYEHLDFLWGQDVKEEVFPVVIDALKHHSLGKAKHFVKQNGFH.

At 1–16 (MSGFNKNQIYWGDYVG) the chain is on the cytoplasmic side. A helical; Signal-anchor for type II membrane protein membrane pass occupies residues 17 to 37 (VIAAFVGVYTELVARIFIYMI). Residues 38-443 (PERVREWFRV…KHFVKQNGFH (406 aa)) are Lumenal-facing. In terms of domain architecture, AB hydrolase-1 spans 116 to 410 (VVYCHHGLMT…HYEHLDFLWG (295 aa)). 2 N-linked (GlcNAc...) asparagine glycosylation sites follow: Asn-134 and Asn-177. The active-site Nucleophile is the Ser-210. Asn-304 and Asn-335 each carry an N-linked (GlcNAc...) asparagine glycan. Residues Asp-378 and His-404 each act as charge relay system in the active site.

The protein belongs to the AB hydrolase superfamily. Lipase family.

The protein localises to the cytoplasm. It is found in the vacuole. Its subcellular location is the membrane. Probable lipase. This Schizosaccharomyces pombe (strain 972 / ATCC 24843) (Fission yeast) protein is Probable lipase C16A3.12c.